Here is a 251-residue protein sequence, read N- to C-terminus: UstYa family oxidase phomYb (251 aa).

Residues 1–47 (MDGYSSKKPRSASPSRSSLTEVEEEERDTLLKTVSLEEEDKSGENGP) are disordered. The chain crosses the membrane as a helical span at residues 58-78 (AIGILMLSNIAFIAAFLTVFV). Asn135 carries an N-linked (GlcNAc...) asparagine glycan. 2 short sequence motifs (HXXHC) span residues 160–164 (HQLHC) and 187–191 (HVSHC).

It belongs to the ustYa family.

The protein localises to the membrane. Its pathway is mycotoxin biosynthesis. Functionally, ustYa family oxidase; part of the gene cluster that mediates the biosynthesis of the phomopsins, a group of hexapeptide mycotoxins which infects lupins and causes lupinosis disease in livestock. Within the pathway, phomYb is probably involved in the construction of the macrocyclic structure of the phomopsins. The pathway starts with the processing of the precursor phomA by several endopeptidases including kexin proteases as well as the cluster-specific S41 family peptidase phomP1 and the oligopeptidase phomG to produce 10 identical copies of the hexapeptide Tyr-Val-Ile-Pro-Ile-Asp. After being excised from the precursor peptide, the core peptides are cyclized and modified post-translationally by enzymes encoded within the gene cluster. The timing and order of proteolysis of the phomA precursor and PTMs are still unknown. Two tyrosinase-like enzymes, phomQ1 and phomQ2, catalyze the chlorination and hydroxylation of Tyr, respectively. PhomYb, is proposed to be involved in the construction of the macrocyclic structure. The other 4 ustYa family proteins may be involved in PTMs that generate the unique structure of phomopsin A. PhomYa is required for the hydroxylation of C-beta of Tyr. PhomYc, phomYd, and phomYe are responsible for the biosynthesis of 2,3-dehydroisoleucine (dIle), 2,3-dehydroaspartic acid (dAsp), and 3,4-dehydroproline (dPro), respectively. While dIle formation by phomYc is indispensable for the installation of dAsp by phomYd, the order of the other PTMs have not been elucidated yet. Most of the biosynthetic enzymes likely have broad substrate specificity, and thus, there might be a metabolic grid from a precursor to phomopsin A. The enzyme(s) responsible for the biosynthesis of 3,4-dehydrovaline (dVal) have also not been identified yet. Finally, phomM acts as an S-adenosylmethionine-dependent alpha-N-methyltransferase that catalyzes two successive N-methylation reactions, converting N-desmethyl-phomopsin A to phomopsin A and phomopsin A further to an N,N-dimethylated congener called phomopsin E. This is UstYa family oxidase phomYb from Diaporthe leptostromiformis (Lupinosis disease fungus).